Reading from the N-terminus, the 677-residue chain is MIQTHSEVKRVEELRRLLQQASYAYYVSDAPIMEDAVYDQLYRELQQLEIQHPELVTPDSPTQRIGERPATQFLSVRHNIPLYSLENAFNVEELQAWDQRWRRQVAPTEAEYVAELKIDGSAIALTYQNGILVRGATRGDGVTGEDITQNVRTIRSIPLRLNFDGIEKVEKVEVRGEAFLPLEVFKQINEERQKAGEQLFANPRNAAAGTLRQLDSRIVARRRLDFFAYTLHISGMDDASIANTQWEALELLQKMGFRVNPNHKLCQSLAEVADYYKYWDTERLNLPYMTDGVVLKLNSFKLQEQLGFTQRFPRWAVALKYPAEEAPTRVENIAVNVGRTGALTPLAQMRPVQLAGTTVSRATLHNSDRIAQLDIRIGDTVIVRKAGEIIPEVVRVIKELRPADTQPFIMPTHCPVCGQPVVRETGEAVTRCVNASCPAILKGSIEHWVSRDALDIKGVGEKLVYQLVDKGLVHSVADLYDLTTERLFALERMGEKSAQKLIEAIAQSKNQPWSRVLYGLGIRHVGSVNAQLLSEKYRAVAELSSAKQSDIEGIYGIGAEIAQSVYQWFRINANQSLIERLQAAGLKLANTEEIPVMNNGILKLNGKTFVVTGTLPTLKRDEVKALIQKAGGKVTDSVSKKTDYLVVGEDAGSKLEKAQALGIAQLTETQLLEILEE.

Residues 35–39 (DAVYD), 84–85 (SL), and Glu-115 contribute to the NAD(+) site. Lys-117 serves as the catalytic N6-AMP-lysine intermediate. Residues Arg-138, Glu-177, Lys-296, and Lys-320 each contribute to the NAD(+) site. 4 residues coordinate Zn(2+): Cys-414, Cys-417, Cys-432, and Cys-437. The 79-residue stretch at 599 to 677 (NGILKLNGKT…ETQLLEILEE (79 aa)) folds into the BRCT domain.

It belongs to the NAD-dependent DNA ligase family. LigA subfamily. Mg(2+) serves as cofactor. The cofactor is Mn(2+).

The enzyme catalyses NAD(+) + (deoxyribonucleotide)n-3'-hydroxyl + 5'-phospho-(deoxyribonucleotide)m = (deoxyribonucleotide)n+m + AMP + beta-nicotinamide D-nucleotide.. In terms of biological role, DNA ligase that catalyzes the formation of phosphodiester linkages between 5'-phosphoryl and 3'-hydroxyl groups in double-stranded DNA using NAD as a coenzyme and as the energy source for the reaction. It is essential for DNA replication and repair of damaged DNA. The sequence is that of DNA ligase from Nostoc sp. (strain PCC 7120 / SAG 25.82 / UTEX 2576).